The following is a 412-amino-acid chain: Imidazolonepropionase (412 aa).

Residues H71 and H73 each contribute to the Fe(3+) site. Residues H71 and H73 each contribute to the Zn(2+) site. 4-imidazolone-5-propanoate is bound by residues R80, Y143, and H176. An N-formimidoyl-L-glutamate-binding site is contributed by Y143. H241 provides a ligand contact to Fe(3+). H241 is a binding site for Zn(2+). Q244 is a 4-imidazolone-5-propanoate binding site. D316 contacts Fe(3+). Residue D316 coordinates Zn(2+). Residues N318 and G320 each coordinate N-formimidoyl-L-glutamate. T321 lines the 4-imidazolone-5-propanoate pocket.

Belongs to the metallo-dependent hydrolases superfamily. HutI family. Zn(2+) serves as cofactor. Fe(3+) is required as a cofactor.

The protein resides in the cytoplasm. The enzyme catalyses 4-imidazolone-5-propanoate + H2O = N-formimidoyl-L-glutamate. It functions in the pathway amino-acid degradation; L-histidine degradation into L-glutamate; N-formimidoyl-L-glutamate from L-histidine: step 3/3. Catalyzes the hydrolytic cleavage of the carbon-nitrogen bond in imidazolone-5-propanoate to yield N-formimidoyl-L-glutamate. It is the third step in the universal histidine degradation pathway. This chain is Imidazolonepropionase, found in Aromatoleum aromaticum (strain DSM 19018 / LMG 30748 / EbN1) (Azoarcus sp. (strain EbN1)).